We begin with the raw amino-acid sequence, 297 residues long: N-acetylneuraminate lyase (297 aa).

The aceneuramate site is built by Ser47 and Thr48. The Proton donor role is filled by Tyr137. Lys165 functions as the Schiff-base intermediate with substrate in the catalytic mechanism. Aceneuramate-binding residues include Thr167, Gly189, Asp191, Glu192, and Ser208.

It belongs to the DapA family. NanA subfamily. As to quaternary structure, homotetramer.

The protein resides in the cytoplasm. It catalyses the reaction aceneuramate = aldehydo-N-acetyl-D-mannosamine + pyruvate. Its pathway is amino-sugar metabolism; N-acetylneuraminate degradation; D-fructose 6-phosphate from N-acetylneuraminate: step 1/5. Functionally, catalyzes the reversible aldol cleavage of N-acetylneuraminic acid (sialic acid; Neu5Ac) to form pyruvate and N-acetylmannosamine (ManNAc) via a Schiff base intermediate. The chain is N-acetylneuraminate lyase from Escherichia fergusonii (strain ATCC 35469 / DSM 13698 / CCUG 18766 / IAM 14443 / JCM 21226 / LMG 7866 / NBRC 102419 / NCTC 12128 / CDC 0568-73).